We begin with the raw amino-acid sequence, 618 residues long: 1-aminocyclopropane-1-carboxylate synthase-like protein 1 (618 aa).

Over residues 11-26 the composition is skewed to low complexity; the sequence is QGTQTPAAQTTCAPST. The segment at 11–54 is disordered; it reads QGTQTPAAQTTCAPSTMSSSSRPPLETLQAQSVSADETPGSALP. The segment covering 27–45 has biased composition (polar residues); sequence MSSSSRPPLETLQAQSVSA. Glutamate 122 lines the substrate pocket. Lysine 340 is subject to N6-(pyridoxal phosphate)lysine.

Belongs to the class-I pyridoxal-phosphate-dependent aminotransferase family.

This chain is 1-aminocyclopropane-1-carboxylate synthase-like protein 1 (accs), found in Takifugu rubripes (Japanese pufferfish).